The primary structure comprises 373 residues: UDP-N-acetylglucosamine--N-acetylmuramyl-(pentapeptide) pyrophosphoryl-undecaprenol N-acetylglucosamine transferase (373 aa).

UDP-N-acetyl-alpha-D-glucosamine-binding positions include T14–G16, N128, R165, S199, and Q295.

This sequence belongs to the glycosyltransferase 28 family. MurG subfamily.

It is found in the cell membrane. It catalyses the reaction di-trans,octa-cis-undecaprenyl diphospho-N-acetyl-alpha-D-muramoyl-L-alanyl-D-glutamyl-meso-2,6-diaminopimeloyl-D-alanyl-D-alanine + UDP-N-acetyl-alpha-D-glucosamine = di-trans,octa-cis-undecaprenyl diphospho-[N-acetyl-alpha-D-glucosaminyl-(1-&gt;4)]-N-acetyl-alpha-D-muramoyl-L-alanyl-D-glutamyl-meso-2,6-diaminopimeloyl-D-alanyl-D-alanine + UDP + H(+). It participates in cell wall biogenesis; peptidoglycan biosynthesis. Functionally, cell wall formation. Catalyzes the transfer of a GlcNAc subunit on undecaprenyl-pyrophosphoryl-MurNAc-pentapeptide (lipid intermediate I) to form undecaprenyl-pyrophosphoryl-MurNAc-(pentapeptide)GlcNAc (lipid intermediate II). The protein is UDP-N-acetylglucosamine--N-acetylmuramyl-(pentapeptide) pyrophosphoryl-undecaprenol N-acetylglucosamine transferase of Mycobacterium sp. (strain JLS).